We begin with the raw amino-acid sequence, 214 residues long: Putative F-box protein At3g58910 (214 aa).

Positions 1–47 (MDRVSSLPDELLCHILSFLTTKETALTSLLSKREIIPLIKSVVFPTL) constitute an F-box domain.

This Arabidopsis thaliana (Mouse-ear cress) protein is Putative F-box protein At3g58910.